Consider the following 330-residue polypeptide: HTH-type transcriptional regulator GanR (330 aa).

Positions Ala2 to Lys57 constitute an HTH lacI-type domain. The segment at residues Ile4–Asn23 is a DNA-binding region (H-T-H motif).

In terms of biological role, negatively regulates the expression of the ganSPQAB operon. Inhibits transcription of the operon by binding to an operator in the promoter region. In the presence of galactobiose, GanR dissociates from the promoter, resulting in the expression of the gan operon. The chain is HTH-type transcriptional regulator GanR from Bacillus subtilis (strain 168).